The sequence spans 530 residues: Bifunctional purine biosynthesis protein PurH (530 aa).

One can recognise an MGS-like domain in the interval 1–148 (MENSRPIKRA…KNHKDVGIVV (148 aa)).

It belongs to the PurH family.

It carries out the reaction (6R)-10-formyltetrahydrofolate + 5-amino-1-(5-phospho-beta-D-ribosyl)imidazole-4-carboxamide = 5-formamido-1-(5-phospho-D-ribosyl)imidazole-4-carboxamide + (6S)-5,6,7,8-tetrahydrofolate. It catalyses the reaction IMP + H2O = 5-formamido-1-(5-phospho-D-ribosyl)imidazole-4-carboxamide. The protein operates within purine metabolism; IMP biosynthesis via de novo pathway; 5-formamido-1-(5-phospho-D-ribosyl)imidazole-4-carboxamide from 5-amino-1-(5-phospho-D-ribosyl)imidazole-4-carboxamide (10-formyl THF route): step 1/1. It functions in the pathway purine metabolism; IMP biosynthesis via de novo pathway; IMP from 5-formamido-1-(5-phospho-D-ribosyl)imidazole-4-carboxamide: step 1/1. This Psychromonas ingrahamii (strain DSM 17664 / CCUG 51855 / 37) protein is Bifunctional purine biosynthesis protein PurH.